The chain runs to 1247 residues: Protein jagged-2 (1247 aa).

Positions 1-23 (MRARGWGRLPRRLLLLLVLCVQA) are cleaved as a signal peptide. Residues 24–1082 (TRPMGYFELQ…ETVVMGGSST (1059 aa)) are Extracellular-facing. An N-linked (GlcNAc...) asparagine glycan is attached at Asn153. A DSL domain is found at 196–240 (VRCDENYYSATCNKFCRPRNDFFGHYTCDQYGNKACMDGWMGKEC). Cystine bridges form between Cys198–Cys207, Cys211–Cys223, Cys231–Cys240, Cys245–Cys256, Cys249–Cys262, Cys264–Cys273, Cys276–Cys287, Cys282–Cys293, Cys295–Cys304, Cys311–Cys323, Cys317–Cys333, Cys335–Cys344, Cys351–Cys362, Cys356–Cys371, Cys373–Cys382, Cys389–Cys400, Cys394–Cys409, Cys411–Cys420, Cys427–Cys438, Cys432–Cys447, Cys449–Cys458, Cys465–Cys475, Cys469–Cys484, Cys486–Cys495, Cys502–Cys513, Cys507–Cys522, Cys524–Cys533, Cys540–Cys551, Cys545–Cys560, Cys562–Cys571, Cys589–Cys612, Cys606–Cys622, Cys624–Cys633, Cys640–Cys651, Cys645–Cys660, Cys662–Cys671, Cys678–Cys689, Cys683–Cys698, Cys700–Cys709, Cys716–Cys727, Cys721–Cys736, and Cys738–Cys747. The EGF-like 1 domain occupies 241–274 (KEAVCKQGCNLLHGGCTVPGECRCSYGWQGKFCD). The EGF-like 2; atypical domain maps to 275 to 305 (ECVPYPGCVHGSCVEPWHCDCETNWGGLLCD). EGF-like domains lie at 307 to 345 (DLNY…KNCE) and 347 to 383 (AEHA…PTCA). Positions 385 to 421 (DIDECASNPCAAGGTCVDQVDGFECICPEQWVGATCQ) constitute an EGF-like 5; calcium-binding domain. Positions 423–459 (DANECEGKPCLNAFSCKNLIGGYYCDCLPGWKGINCQ) constitute an EGF-like 6; calcium-binding domain. The EGF-like 7; calcium-binding domain occupies 461–496 (NINDCHGQCQHGGTCKDLVNGYQCVCPRGFGGRHCE). EGF-like domains follow at residues 498–534 (EYDK…LHCE) and 536–572 (DMDL…KNCS). N-linked (GlcNAc...) asparagine glycosylation occurs at Asn570. The region spanning 574 to 634 (PRDTCPGGAC…DSGFTGTYCH (61 aa)) is the EGF-like 10; atypical domain. An N-linked (GlcNAc...) asparagine glycan is attached at Asn619. Residues 636-672 (NIDDCMGQPCRNGGTCIDEVDSFRCFCPSGWEGELCD) form the EGF-like 11; calcium-binding domain. Residues 674–710 (NPNDCLPDPCHSRGRCYDLVNDFYCACDDGWKGKTCH) enclose the EGF-like 12; calcium-binding domain. EGF-like domains follow at residues 712-748 (REFQ…STCT) and 751-787 (KNSS…RTCT). A glycan (N-linked (GlcNAc...) asparagine) is linked at Asn752. Cystine bridges form between Cys755/Cys766, Cys760/Cys775, Cys777/Cys786, Cys793/Cys804, Cys798/Cys813, Cys815/Cys824, Cys831/Cys842, Cys836/Cys851, and Cys853/Cys862. Residues 789–825 (NTNDCNPLPCYNGGICVDGVNWFRCECAPGFAGPDCR) form the EGF-like 15; calcium-binding domain. The 37-residue stretch at 827 to 863 (NIDECQSSPCAYGATCVDEINGYRCSCPPGRSGPRCQ) folds into the EGF-like 16; calcium-binding domain. Residue Asn1060 is glycosylated (N-linked (GlcNAc...) asparagine). The chain crosses the membrane as a helical span at residues 1083–1103 (GLLVPVLCSVFSVLWLACVVI). Topologically, residues 1104–1247 (CVWWTRKRRK…TKDVRRAGRE (144 aa)) are cytoplasmic. Basic and acidic residues-rich tracts occupy residues 1115-1125 (RERSRLPRDES), 1192-1212 (LSRG…KFTK), and 1230-1247 (VDNR…AGRE). 2 disordered regions span residues 1115-1148 (RERS…GSGL) and 1167-1247 (PRRA…AGRE). Ser1125 is modified (phosphoserine).

Found to be highest in fetal thymus, epidermis, foregut dorsal root ganglia and inner ear. In 2-weeK-old mice, abundant in heart, lung, thymus, skeletal muscle, brain and testis. Expression overlaps partially with Notch1 expression.

It is found in the membrane. Functionally, putative Notch ligand involved in the mediation of Notch signaling. Plays an essential role during limb, craniofacial and thymic development. May be involved in myogenesis and in the development of peripheral and central nervous systems. The protein is Protein jagged-2 (Jag2) of Mus musculus (Mouse).